A 371-amino-acid polypeptide reads, in one-letter code: Macronuclear solute carrier homolog CR-MSC (371 aa).

3 Solcar repeats span residues Arg16–Lys111, Ala120–Asn208, and Pro215–Phe304. The next 6 membrane-spanning stretches (helical) occupy residues Phe22–Val42, Thr89–Tyr109, Val126–Val146, Ala184–Trp204, Leu221–Ile241, and Phe281–Leu301.

This sequence belongs to the mitochondrial carrier (TC 2.A.29) family.

The protein resides in the membrane. The sequence is that of Macronuclear solute carrier homolog CR-MSC from Oxytricha trifallax (Sterkiella histriomuscorum).